A 1772-amino-acid chain; its full sequence is MSKRTQDLATTHANGSVDSATAPGASKRRRLADPVLDTPVELLASGRRTSGRHRPVEDASRQATQQQQAPGTPGGRQQRRAAAAAKESLSTPKRAPAKPKEKTPKATPKKTPSRRNGRRRSVKVEEVEEEEPEEEEGPEEEEAPEEEVEGDDEEEVQVEEEAEPVSLTPLEEKKQELAKLISDNDSRVRLLFHLKQFVSLVFYDPAEAKQDQSSVWEQVSMRESIIGTRTRLTQFQQNYDLWTKYLERKTGGHMRSTRRQIRSKQGALEDDFVIKLKEEMTAVEEEEEEELVEEEEEEEEEEEQEEDEEQEQQEEEEEEQEEEVTSRRGSRRSAPTKAKGKSKTASKTSKSKSKASSKSKSKSKGKGQARASKLSKSRRYVNAVDSSSEEESDYDPNKPYDVSKEVWEPIDTGWLLPDSEDEYYHFDDKFAQHMFPNGVKLKLNVSLKPPRVTHPAHLLLDVAEGQTPDNRERLEGFMSSFKLLDEEMTLEEYEEHYERELETLDKINEMKREGVLQGLADEEEGESLTVAEIRRGFNDPERSTRPTHWDHVVAQACHFAKLMADERKAHVSQAKRLAAAVDQHFRRLEGAEERDKKAQAKLLKTMARKMAQDVMRRWKLAEKVVLKKKEQEAKEEERKQGKKKLKEILENSAQLLEARVRGDNDTPETEEGEKEEVEAVSDDAMSDVDMEDDREQVEVDTRDDDELTVEELRAKYAALDNIKVERAEEEDEEDEENGDDEDEDEEEDDAEIEEETETTTPALETPIDTPAEEDEFSSDTDITLDSEDESSSEQESDYEAETTAPGLAALMGGPKAIEEDEEEDDAFVIKEEEEEVEVEDDEEEEKADTEVDRKVETVSEAVGEAVEEIKSNGVESKPTSNGVDVTELDRVTPERAPAVEPPFLLRGTLRAYQQLGLEWLAGLYNNDTNGILADEMGLGKTIQTISLLSYLACEHHIWGPHLIIVPTSVMLNWEMEFKRFAPGFKVMTYYGNPVQRREKRRGWNKEDTWHVCITSYQLVLQDLFAFRRKRWHYMILDEAHNIKNFRSQRWQSLLHFNTVRRLLLTGTPLQNNLMELWSLLYFLMPSSRNQMDMPGFANLKDFQEWFSRPIDKMVEGGVDEEAKTTVSKLHQILRPYLLRRLKKDVEKQMPAKYEHVVYCRLSKRQRYLYDDFMSRAQTRETLKTGNFLSIINCLMQLRKVCNHPDLFEVRPIVTSFVQEQSVITPYERVSDRVKSLLVNTVDGGYAPSEVSLSFLGFNAELEDMSTHEATSFRKYHNVQTVKNRIRELEKFCPAETPEEERYNDIEGHYKHMHHASFQQVIGSLKRVEYLHQIALAKKPVYGRNLVEVCTINTSRLQPDRPEETNESSYHWQLTHLRHPTVQECANNMAPYIERFACITPKAVTLNMAELSLGGIGPILQQRYFKQVTPKKSQRVVVGPPAAIADPFHQAQVKLSIAFPDKRLLQYDCGKLQRLATLLQDLIAGGHRALIFTQMTKVLDVLEQFLNIHGLRYMRLDGATKIEQRQLLTERFNTDPKIPVFILSTRSGGLGINLTGADTVIFYDSDWNPSMDKQCQDRCHRIGQTRDVHIYRFVSEHTIESNILKKANQKQILDNVVIQDGEFTTDYFNKMSVHDMLGLEPDDDAAPVADTLNLSGKNLERALAQAEDADDAAAAKVATKETNLDVEDFDETQKENNKGATPGSRSTSATPMEKENTGELSSAMDSPTPVATPDVAVDNGGGDDDDSDSDESDSGIGHIDEYMIKFIEDGWFW.

Disordered regions lie at residues 1 to 170 (MSKR…LTPL) and 282 to 402 (AVEE…PYDV). Polar residues predominate over residues 7-19 (DLATTHANGSVDS). Over residues 61–71 (RQATQQQQAPG) the composition is skewed to low complexity. The segment covering 107-121 (TPKKTPSRRNGRRRS) has biased composition (basic residues). Composition is skewed to acidic residues over residues 126 to 163 (EVEEEEPEEEEGPEEEEAPEEEVEGDDEEEVQVEEEAE) and 282 to 323 (AVEE…QEEE). Basic residues predominate over residues 338 to 379 (AKGKSKTASKTSKSKSKASSKSKSKSKGKGQARASKLSKSRR). In terms of domain architecture, HSA spans 536–609 (GFNDPERSTR…AKLLKTMARK (74 aa)). Residues 656–854 (LEARVRGDND…EKADTEVDRK (199 aa)) are disordered. 4 stretches are compositionally biased toward acidic residues: residues 665 to 695 (DTPETEEGEKEEVEAVSDDAMSDVDMEDDRE), 727 to 757 (AEEEDEEDEENGDDEDEDEEEDDAEIEEETE), 770 to 800 (PAEEDEFSSDTDITLDSEDESSSEQESDYEA), and 818 to 847 (EEDEEEDDAFVIKEEEEEVEVEDDEEEEKA). Residues 921 to 1086 (AGLYNNDTNG…WSLLYFLMPS (166 aa)) enclose the Helicase ATP-binding domain. 934–941 (DEMGLGKT) lines the ATP pocket. The DEAH box signature appears at 1037–1040 (DEAH). Residues 1470–1623 (KLQRLATLLQ…NVVIQDGEFT (154 aa)) enclose the Helicase C-terminal domain. Residues 1681–1757 (TNLDVEDFDE…SDESDSGIGH (77 aa)) are disordered. The span at 1740 to 1752 (GGDDDDSDSDESD) shows a compositional bias: acidic residues.

This sequence belongs to the SNF2/RAD54 helicase family. SWR1 subfamily. Component of the SWR1 chromatin-remodeling complex.

It localises to the nucleus. It catalyses the reaction ATP + H2O = ADP + phosphate + H(+). In terms of biological role, catalytic component of the SWR1 complex which mediates the ATP-dependent exchange of histone H2A for the H2A variant HZT1 leading to transcriptional regulation of selected genes by chromatin remodeling. This chain is Helicase SWR1 (SWR1), found in Yarrowia lipolytica (strain CLIB 122 / E 150) (Yeast).